Reading from the N-terminus, the 306-residue chain is Tyrosine recombinase XerC (306 aa).

The Core-binding (CB) domain occupies 2–81; it reads AKASAAIEEF…ALRQFYGFLV (80 aa). Residues 102–283 form the Tyr recombinase domain; that stretch reads PLPKTLSHKE…DAARLVALVN (182 aa). Active-site residues include Arg-146, Lys-170, His-235, Arg-238, and His-261. Tyr-270 serves as the catalytic O-(3'-phospho-DNA)-tyrosine intermediate.

This sequence belongs to the 'phage' integrase family. XerC subfamily. As to quaternary structure, forms a cyclic heterotetrameric complex composed of two molecules of XerC and two molecules of XerD.

The protein resides in the cytoplasm. Its function is as follows. Site-specific tyrosine recombinase, which acts by catalyzing the cutting and rejoining of the recombining DNA molecules. The XerC-XerD complex is essential to convert dimers of the bacterial chromosome into monomers to permit their segregation at cell division. It also contributes to the segregational stability of plasmids. In Erythrobacter litoralis (strain HTCC2594), this protein is Tyrosine recombinase XerC.